Consider the following 157-residue polypeptide: Transcriptional repressor NrdR (157 aa).

Residues 1-22 (MKCPYCSSPDSRVINSRPSDDG) form a disordered region. A zinc finger spans residues 3 to 34 (CPYCSSPDSRVINSRPSDDGASIRRRRECLTC). The segment covering 8–17 (SPDSRVINSR) has biased composition (polar residues). The 88-residue stretch at 49–136 (LMVVKRSGVR…VYRDFDSLER (88 aa)) folds into the ATP-cone domain.

Belongs to the NrdR family. Requires Zn(2+) as cofactor.

In terms of biological role, negatively regulates transcription of bacterial ribonucleotide reductase nrd genes and operons by binding to NrdR-boxes. This is Transcriptional repressor NrdR from Deinococcus radiodurans (strain ATCC 13939 / DSM 20539 / JCM 16871 / CCUG 27074 / LMG 4051 / NBRC 15346 / NCIMB 9279 / VKM B-1422 / R1).